A 1116-amino-acid polypeptide reads, in one-letter code: ELKS/Rab6-interacting/CAST family member 1 (1116 aa).

The interval 1 to 54 is disordered; it reads MYGSARSVGKVEPSSQSPGRSPRLPRSPRLGHRRTNSTGGSSGSSVGGGSGKTL. K10 carries the post-translational modification N6-acetyllysine. Residues 13 to 28 show a composition bias toward low complexity; the sequence is PSSQSPGRSPRLPRSP. A phosphoserine mark is found at S17, S21, and S37. At T38 the chain carries Phosphothreonine. A compositionally biased stretch (gly residues) spans 40–51; sequence GSSGSSVGGGSG. S55, S75, and S94 each carry phosphoserine. Residues 144-988 adopt a coiled-coil conformation; it reads RQARDNTIMD…RMKLMADNYE (845 aa). Residues 590–602 show a composition bias toward basic and acidic residues; it reads KEKQMSSLKERVK. Disordered stretches follow at residues 590-609 and 814-836; these read KEKQMSSLKERVKSLQADTT and ARRREDNLNDSSQQLQDSLRKKD. S1005 carries the post-translational modification Phosphoserine. T1046 carries the post-translational modification Phosphothreonine. Positions 1046-1108 constitute an FIP-RBD domain; it reads TPPASYNLDD…DHCPDILEQV (63 aa). Residues 1060–1100 adopt a coiled-coil conformation; sequence WENELQKMTRGQLQDELEKGERDNAELQEFANAILQQIADH.

Part of a complex with CHUK, IKBKB and IKBKG. Interacts with CHUK, IKBKB and IKBKG. The interaction with IKBKG is independent of CHUK and IKBKB. Interacts with NFKBIA. Isoform 4 interacts with PPFIA1, and through its C-terminus with the PDZ domains of RIMS1 and RIMS2. Interacts with ERC2/CAST1. Interacts with the GTB-bound forms of RAB6A isoform 1 and isoform 2 and with RAB6B. The interaction was strongest with RAB6B, followed by RAB6A isoform 2 and weakest with RAB6A isoform 1. Interacts with SDCCAG8. Part of a cortical microtubule stabilization complex (CMSC) composed of KANK1, PPFIA1, PPFIBP1, ERC1/ELKS, PHLDB2/LL5beta, CLASPs, KIF21A and possibly additional interactors; within CMSCs KANK1 and PHLDB2/LL5beta appear to be the core components for targeting of microtubule-binding proteins KIF21A and CLASPs, whereas PPFIA1, PPFIBP1 and ERC1/ELKS serve as scaffolds for protein clustering. In terms of tissue distribution, widely expressed. Isoform 2 and isoform 4 are abundantly expressed in brain. Isoform 1 and isoform 3 are predominantly expressed in testis and thyroid, and isoform 1 predominates in other tissues tested.

It is found in the cytoplasm. The protein resides in the cytoskeleton. The protein localises to the microtubule organizing center. It localises to the centrosome. Its subcellular location is the membrane. It is found in the golgi apparatus membrane. The protein resides in the presynaptic cell membrane. The protein localises to the cell projection. It localises to the podosome. Functionally, regulatory subunit of the IKK complex. Probably recruits IkappaBalpha/NFKBIA to the complex. May be involved in the organization of the cytomatrix at the nerve terminals active zone (CAZ) which regulates neurotransmitter release. May be involved in vesicle trafficking at the CAZ. May be involved in Rab-6 regulated endosomes to Golgi transport. This Homo sapiens (Human) protein is ELKS/Rab6-interacting/CAST family member 1 (ERC1).